Consider the following 272-residue polypeptide: 2,3,4,5-tetrahydropyridine-2,6-dicarboxylate N-succinyltransferase (272 aa).

Residues Arg104 and Asp141 each contribute to the substrate site.

The protein belongs to the transferase hexapeptide repeat family. In terms of assembly, homotrimer.

It localises to the cytoplasm. It catalyses the reaction (S)-2,3,4,5-tetrahydrodipicolinate + succinyl-CoA + H2O = (S)-2-succinylamino-6-oxoheptanedioate + CoA. It functions in the pathway amino-acid biosynthesis; L-lysine biosynthesis via DAP pathway; LL-2,6-diaminopimelate from (S)-tetrahydrodipicolinate (succinylase route): step 1/3. The polypeptide is 2,3,4,5-tetrahydropyridine-2,6-dicarboxylate N-succinyltransferase (Alkalilimnicola ehrlichii (strain ATCC BAA-1101 / DSM 17681 / MLHE-1)).